Here is a 911-residue protein sequence, read N- to C-terminus: Eukaryotic translation initiation factor 3 subunit C (911 aa).

The interval 1–44 is disordered; sequence MSRFFTTGSDSESESSLSGEELVTKPVSGNYGKQPLLLSEDEED. The span at 8–21 shows a compositional bias: low complexity; that stretch reads GSDSESESSLSGEE. Phosphoserine occurs at positions 9, 11, 13, 15, 16, 18, and 39. K99 carries the N6-acetyllysine modification. 2 disordered regions span residues 157 to 299 and 520 to 540; these read TNYK…GGEW and QLTP…NEGE. Phosphoserine is present on residues S166, S178, S181, and S182. Residues 166-190 show a composition bias toward acidic residues; that stretch reads SADEDAEKNEEDSEGSSDEDEDEDG. Residues 199 to 208 show a composition bias toward basic and acidic residues; sequence KKQESSGESR. Residues 216–230 show a composition bias toward acidic residues; that stretch reads DDDEDSEDSEDEEWD. Positions 259 to 276 are enriched in basic and acidic residues; that stretch reads PTTEEDKKAAEKKREDKA. A compositionally biased stretch (polar residues) spans 520–529; it reads QLTPPEGSSK. Position 522 is a phosphothreonine (T522). Residue K641 is modified to N6-acetyllysine. The PCI domain occupies 671-847; that stretch reads FHLHINLELL…QTVVMHRTEP (177 aa). The segment at 883 to 911 is disordered; the sequence is FRDQKDGYRKNEGYMRRGGYRQQQSQTAY. Residues 884-897 show a composition bias toward basic and acidic residues; sequence RDQKDGYRKNEGYM. At S907 the chain carries Phosphoserine.

This sequence belongs to the eIF-3 subunit C family. In terms of assembly, component of the eukaryotic translation initiation factor 3 (eIF-3) complex, which is composed of 13 subunits: EIF3A, EIF3B, EIF3C, EIF3D, EIF3E, EIF3F, EIF3G, EIF3H, EIF3I, EIF3J, EIF3K, EIF3L and EIF3M. The eIF-3 complex appears to include 3 stable modules: module A is composed of EIF3A, EIF3B, EIF3G and EIF3I; module B is composed of EIF3F, EIF3H, and EIF3M; and module C is composed of EIF3C, EIF3D, EIF3E, EIF3K and EIF3L. EIF3C of module C binds EIF3B of module A and EIF3H of module B, thereby linking the three modules. EIF3J is a labile subunit that binds to the eIF-3 complex via EIF3B. The eIF-3 complex may interact with RPS6KB1 under conditions of nutrient depletion. Mitogenic stimulation may lead to binding and activation of a complex composed of MTOR and RPTOR, leading to phosphorylation and release of RPS6KB1 and binding of EIF4B to eIF-3. Interacts with ALKBH4, IFIT1 and IFIT2. Interacts with BZW2/5MP1. Phosphorylated. Phosphorylation is enhanced upon serum stimulation.

It localises to the cytoplasm. Functionally, component of the eukaryotic translation initiation factor 3 (eIF-3) complex, which is required for several steps in the initiation of protein synthesis. The eIF-3 complex associates with the 40S ribosome and facilitates the recruitment of eIF-1, eIF-1A, eIF-2:GTP:methionyl-tRNAi and eIF-5 to form the 43S pre-initiation complex (43S PIC). The eIF-3 complex stimulates mRNA recruitment to the 43S PIC and scanning of the mRNA for AUG recognition. The eIF-3 complex is also required for disassembly and recycling of post-termination ribosomal complexes and subsequently prevents premature joining of the 40S and 60S ribosomal subunits prior to initiation. The eIF-3 complex specifically targets and initiates translation of a subset of mRNAs involved in cell proliferation, including cell cycling, differentiation and apoptosis, and uses different modes of RNA stem-loop binding to exert either translational activation or repression. The chain is Eukaryotic translation initiation factor 3 subunit C (Eif3c) from Mus musculus (Mouse).